Here is a 198-residue protein sequence, read N- to C-terminus: Small ribosomal subunit protein uS11 (198 aa).

2 stretches are compositionally biased toward low complexity: residues 1–11 (MSGTEAGAGEP) and 19–58 (EAAQ…TAQP). Disordered stretches follow at residues 1 to 72 (MSGT…TPAD) and 178 to 198 (DVTP…GRRV). Residues 187–198 (TRKKGGKRGRRV) are compositionally biased toward basic residues.

It belongs to the universal ribosomal protein uS11 family. Part of the 30S ribosomal subunit.

In terms of biological role, located on the platform of the 30S subunit. The chain is Small ribosomal subunit protein uS11 from Cenarchaeum symbiosum (strain A).